The primary structure comprises 139 residues: uncharacterized protein (139 aa).

Polar residues predominate over residues 1 to 11 (MALSMSLSSDI). 2 disordered regions span residues 1 to 80 (MALS…AAAA) and 100 to 139 (ASSPAGEAGSWGRARRGGPRPGAPCKGLAGPPLRPGLARS). Residues 63–80 (GAGSASAGGSRLAAAAAA) are compositionally biased toward low complexity.

This is an uncharacterized protein from Homo sapiens (Human).